A 490-amino-acid polypeptide reads, in one-letter code: Angiopoietin-related protein 1 (490 aa).

A signal peptide spans 1–22; that stretch reads MKAFVWTLSVLLFLLGSGHCKG. Residues 79–167 adopt a coiled-coil conformation; that stretch reads ITRMDLENLK…LNVTTEMLKM (89 aa). Asn159 and Asn187 each carry an N-linked (GlcNAc...) asparagine glycan. Residues 270–490 enclose the Fibrinogen C-terminal domain; it reads FINEGPFKDC…AVQMMIKPID (221 aa). Intrachain disulfides connect Cys279/Cys308 and Cys431/Cys444.

The protein resides in the secreted. This chain is Angiopoietin-related protein 1 (Angptl1), found in Mus musculus (Mouse).